An 859-amino-acid chain; its full sequence is Leucine--tRNA ligase (859 aa).

The short motif at 42–52 (PYPSGKLHMGH) is the 'HIGH' region element. Residues 618–622 (KMSKS) carry the 'KMSKS' region motif. K621 contacts ATP.

This sequence belongs to the class-I aminoacyl-tRNA synthetase family.

It is found in the cytoplasm. It carries out the reaction tRNA(Leu) + L-leucine + ATP = L-leucyl-tRNA(Leu) + AMP + diphosphate. In Buchnera aphidicola subsp. Acyrthosiphon pisum (strain APS) (Acyrthosiphon pisum symbiotic bacterium), this protein is Leucine--tRNA ligase.